We begin with the raw amino-acid sequence, 503 residues long: GMP synthase [glutamine-hydrolyzing] (503 aa).

Residues 3–189 enclose the Glutamine amidotransferase type-1 domain; the sequence is PVLVVDFGSQ…AFLSSFAAPN (187 aa). Catalysis depends on Cys-80, which acts as the Nucleophile. Catalysis depends on residues His-165 and Glu-167. Residues 190–380 form the GMPS ATP-PPase domain; it reads WDPEQTICGT…LGIPKHIVHR (191 aa). Residue 217 to 223 participates in ATP binding; it reads SGGVDSV.

In terms of assembly, homodimer.

The enzyme catalyses XMP + L-glutamine + ATP + H2O = GMP + L-glutamate + AMP + diphosphate + 2 H(+). The protein operates within purine metabolism; GMP biosynthesis; GMP from XMP (L-Gln route): step 1/1. Catalyzes the synthesis of GMP from XMP. This chain is GMP synthase [glutamine-hydrolyzing], found in Tropheryma whipplei (strain Twist) (Whipple's bacillus).